Reading from the N-terminus, the 210-residue chain is Natriuretic peptide BM026 (210 aa).

An N-terminal signal peptide occupies residues 1–26; it reads MVGPSRLAGGGLLLLLLALLPVALDG. Residues 83–99 are natriuretic peptide domain 1; that stretch reads CFGHKIDRISHSSGMGC. A disulfide bridge links cysteine 83 with cysteine 99. Positions 122–134 are enriched in basic and acidic residues; sequence ESKKSRAARDRMV. The tract at residues 122–210 is disordered; that stretch reads ESKKSRAARD…QFNSKSSQVA (89 aa). Positions 140 to 150 are enriched in gly residues; sequence AGGGGGGGGGD. The segment covering 156 to 176 has biased composition (basic and acidic residues); that stretch reads ELAKKDQHNNCFGRRIDRISH. A natriuretic peptide domain 2 region spans residues 166–182; it reads CFGRRIDRISHSTDLGC. A disulfide bridge connects residues cysteine 166 and cysteine 182. A compositionally biased stretch (polar residues) spans 201-210; the sequence is QFNSKSSQVA.

This sequence belongs to the natriuretic peptide family. Expressed by the venom gland.

The protein resides in the secreted. Its function is as follows. Natriuretic peptide that dose-dependently induces the rapid relaxation of rat aortic strips phenylephrine-precontracted. Acts by stimulating cGMP production in a dose-dependent manner (by probably activating NPR1 and/or NPR2). May also show potent hypotensive effects. This chain is Natriuretic peptide BM026, found in Bungarus multicinctus (Many-banded krait).